The following is a 118-amino-acid chain: D-dopachrome decarboxylase (118 aa).

Proline 2 is subject to N-acetylproline. Lysine 33 carries the N6-acetyllysine modification.

The protein belongs to the MIF family. As to quaternary structure, homotrimer. In terms of tissue distribution, highly expressed in the liver and at lower levels in the heart, lung and pancreas.

The protein resides in the cytoplasm. It catalyses the reaction D-dopachrome + H(+) = 5,6-dihydroxyindole + CO2. Tautomerization of D-dopachrome with decarboxylation to give 5,6-dihydroxyindole (DHI). This Homo sapiens (Human) protein is D-dopachrome decarboxylase (DDT).